We begin with the raw amino-acid sequence, 426 residues long: tRNA methyltransferase 10 homolog C (426 aa).

A mitochondrion-targeting transit peptide spans 1–41; it reads MPVLLKMSVSITFLRPFARVLVPFTLHRKRRVLYSTIMQRY. S86 is modified (phosphoserine). Residues 138–166 adopt a coiled-coil conformation; sequence LYIKEKMKKARQIKKEMKKAEKEEPKKDQ. Positions 193–385 constitute an SAM-dependent MTase TRM10-type domain; sequence MGWKGAQAMQ…KFVPSRKHAG (193 aa).

Belongs to the class IV-like SAM-binding methyltransferase superfamily. TRM10 family. In terms of assembly, component of mitochondrial ribonuclease P, a complex composed of TRMT10C/MRPP1, HSD17B10/MRPP2 and PRORP/MRPP3. Interacts with HSD17B10/MRPP2; forming the MRPP1-MRPP2 subcomplex of the mitochondrial ribonuclease P complex. Interacts with GRSF1.

The protein resides in the mitochondrion matrix. It is found in the mitochondrion nucleoid. The enzyme catalyses adenosine(9) in tRNA + S-adenosyl-L-methionine = N(1)-methyladenosine(9) in tRNA + S-adenosyl-L-homocysteine + H(+). It catalyses the reaction guanosine(9) in tRNA + S-adenosyl-L-methionine = N(1)-methylguanosine(9) in tRNA + S-adenosyl-L-homocysteine + H(+). It carries out the reaction an adenosine in mRNA + S-adenosyl-L-methionine = an N(1)-methyladenosine in mRNA + S-adenosyl-L-homocysteine + H(+). Mitochondrial tRNA N(1)-methyltransferase involved in mitochondrial tRNA maturation. Component of mitochondrial ribonuclease P, a complex composed of TRMT10C/MRPP1, HSD17B10/MRPP2 and PRORP/MRPP3, which cleaves tRNA molecules in their 5'-ends. Together with HSD17B10/MRPP2, forms a subcomplex of the mitochondrial ribonuclease P, named MRPP1-MRPP2 subcomplex, which displays functions that are independent of the ribonuclease P activity. The MRPP1-MRPP2 subcomplex catalyzes the formation of N(1)-methylguanine and N(1)-methyladenine at position 9 (m1G9 and m1A9, respectively) in tRNAs; TRMT10C/MRPP1 acting as the catalytic N(1)-methyltransferase subunit. The MRPP1-MRPP2 subcomplex also acts as a tRNA maturation platform: following 5'-end cleavage by the mitochondrial ribonuclease P complex, the MRPP1-MRPP2 subcomplex enhances the efficiency of 3'-processing catalyzed by ELAC2, retains the tRNA product after ELAC2 processing and presents the nascent tRNA to the mitochondrial CCA tRNA nucleotidyltransferase TRNT1 enzyme. In addition to tRNA N(1)-methyltransferase activity, TRMT10C/MRPP1 also acts as a mRNA N(1)-methyltransferase by mediating methylation of adenosine residues at the N(1) position of MT-ND5 mRNA. Associates with mitochondrial DNA complexes at the nucleoids to initiate RNA processing and ribosome assembly. The chain is tRNA methyltransferase 10 homolog C from Bos taurus (Bovine).